Here is a 494-residue protein sequence, read N- to C-terminus: UDP-N-acetylmuramoyl-L-alanyl-D-glutamate--2,6-diaminopimelate ligase (494 aa).

Ser32 serves as a coordination point for UDP-N-acetyl-alpha-D-muramoyl-L-alanyl-D-glutamate. 112–118 is a binding site for ATP; the sequence is GTNGKTT. UDP-N-acetyl-alpha-D-muramoyl-L-alanyl-D-glutamate contacts are provided by residues Asn153, 154–155, Ser181, and Arg189; that span reads TT. At Lys221 the chain carries N6-carboxylysine. Meso-2,6-diaminopimelate is bound by residues Arg383, 407 to 410, Gly459, and Glu463; that span reads DNPR. A Meso-diaminopimelate recognition motif motif is present at residues 407-410; that stretch reads DNPR.

The protein belongs to the MurCDEF family. MurE subfamily. Mg(2+) serves as cofactor. Carboxylation is probably crucial for Mg(2+) binding and, consequently, for the gamma-phosphate positioning of ATP.

Its subcellular location is the cytoplasm. The enzyme catalyses UDP-N-acetyl-alpha-D-muramoyl-L-alanyl-D-glutamate + meso-2,6-diaminopimelate + ATP = UDP-N-acetyl-alpha-D-muramoyl-L-alanyl-gamma-D-glutamyl-meso-2,6-diaminopimelate + ADP + phosphate + H(+). Its pathway is cell wall biogenesis; peptidoglycan biosynthesis. Functionally, catalyzes the addition of meso-diaminopimelic acid to the nucleotide precursor UDP-N-acetylmuramoyl-L-alanyl-D-glutamate (UMAG) in the biosynthesis of bacterial cell-wall peptidoglycan. This Solibacter usitatus (strain Ellin6076) protein is UDP-N-acetylmuramoyl-L-alanyl-D-glutamate--2,6-diaminopimelate ligase.